The sequence spans 460 residues: ATP synthase subunit beta (460 aa).

ATP is bound at residue 150-157; the sequence is GGAGVGKT.

This sequence belongs to the ATPase alpha/beta chains family. As to quaternary structure, F-type ATPases have 2 components, CF(1) - the catalytic core - and CF(0) - the membrane proton channel. CF(1) has five subunits: alpha(3), beta(3), gamma(1), delta(1), epsilon(1). CF(0) has three main subunits: a(1), b(2) and c(9-12). The alpha and beta chains form an alternating ring which encloses part of the gamma chain. CF(1) is attached to CF(0) by a central stalk formed by the gamma and epsilon chains, while a peripheral stalk is formed by the delta and b chains.

Its subcellular location is the cell inner membrane. The enzyme catalyses ATP + H2O + 4 H(+)(in) = ADP + phosphate + 5 H(+)(out). In terms of biological role, produces ATP from ADP in the presence of a proton gradient across the membrane. The catalytic sites are hosted primarily by the beta subunits. The chain is ATP synthase subunit beta from Pectobacterium atrosepticum (strain SCRI 1043 / ATCC BAA-672) (Erwinia carotovora subsp. atroseptica).